Consider the following 340-residue polypeptide: DNA-directed RNA polymerase subunit alpha (340 aa).

An alpha N-terminal domain (alpha-NTD) region spans residues 1-233; the sequence is MVREEVAVST…DLFIPFLHAE (233 aa). The interval 266–340 is alpha C-terminal domain (alpha-CTD); sequence KKEIALKCIF…GIDLPKNKRF (75 aa).

Belongs to the RNA polymerase alpha chain family. In terms of assembly, in plastids the minimal PEP RNA polymerase catalytic core is composed of four subunits: alpha, beta, beta', and beta''. When a (nuclear-encoded) sigma factor is associated with the core the holoenzyme is formed, which can initiate transcription.

It is found in the plastid. Its subcellular location is the chloroplast. The catalysed reaction is RNA(n) + a ribonucleoside 5'-triphosphate = RNA(n+1) + diphosphate. In terms of biological role, DNA-dependent RNA polymerase catalyzes the transcription of DNA into RNA using the four ribonucleoside triphosphates as substrates. This chain is DNA-directed RNA polymerase subunit alpha, found in Calycanthus floridus var. glaucus (Eastern sweetshrub).